The following is a 302-amino-acid chain: Succinate--CoA ligase [ADP-forming] subunit alpha (302 aa).

CoA is bound by residues 17–20, Lys-43, and 96–98; these read TGST and ITE. Residue Tyr-159 participates in substrate binding. Catalysis depends on His-247, which acts as the Tele-phosphohistidine intermediate.

The protein belongs to the succinate/malate CoA ligase alpha subunit family. Heterotetramer of two alpha and two beta subunits.

The enzyme catalyses succinate + ATP + CoA = succinyl-CoA + ADP + phosphate. The catalysed reaction is GTP + succinate + CoA = succinyl-CoA + GDP + phosphate. It functions in the pathway carbohydrate metabolism; tricarboxylic acid cycle; succinate from succinyl-CoA (ligase route): step 1/1. In terms of biological role, succinyl-CoA synthetase functions in the citric acid cycle (TCA), coupling the hydrolysis of succinyl-CoA to the synthesis of either ATP or GTP and thus represents the only step of substrate-level phosphorylation in the TCA. The alpha subunit of the enzyme binds the substrates coenzyme A and phosphate, while succinate binding and nucleotide specificity is provided by the beta subunit. The polypeptide is Succinate--CoA ligase [ADP-forming] subunit alpha (Staphylococcus epidermidis (strain ATCC 35984 / DSM 28319 / BCRC 17069 / CCUG 31568 / BM 3577 / RP62A)).